Consider the following 624-residue polypeptide: Laccase-1 (624 aa).

Residues 1-20 form the signal peptide; sequence MRGVVKLFFLSCSLVSLVSS. Plastocyanin-like domains lie at 69–183 and 195–355; these read TKAL…HSPN and DRIV…VVRY. Positions 117, 119, 162, and 164 each coordinate Cu cation. Residues cysteine 138 and cysteine 578 are joined by a disulfide bond. Asparagine 242, asparagine 320, and asparagine 430 each carry an N-linked (GlcNAc...) asparagine glycan. The Plastocyanin-like 3 domain occupies 469–562; that stretch reads IIINNLDGVI…GKLAVVVIQP (94 aa). Histidine 480, histidine 483, and histidine 485 together coordinate Cu cation. Asparagine 503 carries N-linked (GlcNAc...) asparagine glycosylation. The Cu cation site is built by histidine 543, cysteine 544, histidine 545, and histidine 549. Positions 582-603 are disordered; sequence DPNAFGPARRSPSPSIQSSKTS. Positions 592 to 603 are enriched in low complexity; the sequence is SPSPSIQSSKTS.

It belongs to the multicopper oxidase family. Cu cation is required as a cofactor.

The protein resides in the secreted. Its subcellular location is the cell wall. It catalyses the reaction 4 hydroquinone + O2 = 4 benzosemiquinone + 2 H2O. Laccase that catalyzes the oxidation of certain aromatic compounds, including L-dopa, to quinones, which then polymerize to melanin. Able to oxidize a wide variety of aromatic diphenol and diamino groups in the ortho, meta, and para positions but not monophenolic groups such as in phenol, tyramine, or tyrosine. Plays an important role in virulence. Plays a role in dissemination to extrapulmonary sites but is not involved in pulmonary growth or in elicitation of cellular immune responses in the lung. This Cryptococcus neoformans var. grubii serotype A (strain H99 / ATCC 208821 / CBS 10515 / FGSC 9487) (Filobasidiella neoformans var. grubii) protein is Laccase-1 (LAC1).